Here is a 362-residue protein sequence, read N- to C-terminus: Caveolae-associated protein 4 (362 aa).

Residues Met-1–Asp-24 form a disordered region. A coiled-coil region spans residues Ile-100–Lys-120. Phosphoserine occurs at positions 152, 171, and 172. Basic and acidic residues predominate over residues Pro-227–Lys-255. The segment at Pro-227–Ala-261 is disordered. At Tyr-324 the chain carries Phosphotyrosine. Residue Thr-334 is modified to Phosphothreonine. Residue Ser-353 is modified to Phosphoserine.

This sequence belongs to the CAVIN family. As to quaternary structure, component of the CAVIN complex composed of CAVIN1, CAVIN2, CAVIN3 and CAVIN4. Interacts with CAVIN1, CAV3, ADRA1A and ADRA1B. Interacts with CAVIN2; this augments the transactivation of NPPA. Interacts with MAPK1 and MAPK3. As to expression, expressed at much higher levels in cardiomyocytes than in non-cardiomyocytes.

The protein localises to the cytoplasm. The protein resides in the myofibril. It is found in the sarcomere. It localises to the cytosol. Its subcellular location is the cell membrane. The protein localises to the sarcolemma. The protein resides in the membrane. It is found in the caveola. Functionally, modulates the morphology of formed caveolae in cardiomyocytes, but is not required for caveolar formation. Facilitates the recruitment of MAPK1/3 to caveolae within cardiomyocytes and regulates alpha-1 adrenergic receptor-induced hypertrophic responses in cardiomyocytes through MAPK1/3 activation. Contributes to proper membrane localization and stabilization of caveolin-3 (CAV3) in cardiomyocytes. Induces RHOA activation and activates NPPA transcription and myofibrillar organization through the Rho/ROCK signaling pathway. In Rattus norvegicus (Rat), this protein is Caveolae-associated protein 4.